Reading from the N-terminus, the 37-residue chain is Cytochrome b6-f complex subunit 5 (37 aa).

Residues 5–25 traverse the membrane as a helical segment; the sequence is FLFGIVLGLIPITLAGLFVTA.

The protein belongs to the PetG family. In terms of assembly, the 4 large subunits of the cytochrome b6-f complex are cytochrome b6, subunit IV (17 kDa polypeptide, PetD), cytochrome f and the Rieske protein, while the 4 small subunits are PetG, PetL, PetM and PetN. The complex functions as a dimer.

The protein resides in the plastid. The protein localises to the chloroplast thylakoid membrane. In terms of biological role, component of the cytochrome b6-f complex, which mediates electron transfer between photosystem II (PSII) and photosystem I (PSI), cyclic electron flow around PSI, and state transitions. PetG is required for either the stability or assembly of the cytochrome b6-f complex. This is Cytochrome b6-f complex subunit 5 from Capsella bursa-pastoris (Shepherd's purse).